Here is a 68-residue protein sequence, read N- to C-terminus: MYKQKKKNHPFQCKKKKKKKKKKKKKIKLLFNYFLFFNFIITTFSDDKQLGFILFHYFKIIEVIIKDN.

The disordered stretch occupies residues 1-20 (MYKQKKKNHPFQCKKKKKKK). A helical membrane pass occupies residues 27-44 (IKLLFNYFLFFNFIITTF).

Its subcellular location is the membrane. This is an uncharacterized protein from Dictyostelium discoideum (Social amoeba).